We begin with the raw amino-acid sequence, 677 residues long: Methionine--tRNA ligase (677 aa).

Residues 15-25 (PYANGSIHLGH) carry the 'HIGH' region motif. Cysteine 146, cysteine 149, cysteine 159, and cysteine 162 together coordinate Zn(2+). Positions 333–337 (KMSKS) match the 'KMSKS' region motif. Lysine 336 is a binding site for ATP. The region spanning 575–677 (DFAKIDLRVA…DGAKPGQQVK (103 aa)) is the tRNA-binding domain.

The protein belongs to the class-I aminoacyl-tRNA synthetase family. MetG type 1 subfamily. In terms of assembly, homodimer. Zn(2+) serves as cofactor.

The protein localises to the cytoplasm. It catalyses the reaction tRNA(Met) + L-methionine + ATP = L-methionyl-tRNA(Met) + AMP + diphosphate. In terms of biological role, is required not only for elongation of protein synthesis but also for the initiation of all mRNA translation through initiator tRNA(fMet) aminoacylation. In Salmonella typhi, this protein is Methionine--tRNA ligase.